The sequence spans 494 residues: Amidophosphoribosyltransferase (494 aa).

A propeptide spanning residues Met1–Glu10 is cleaved from the precursor. Residue Cys11 is the Nucleophile of the active site. The region spanning Cys11–Lys231 is the Glutamine amidotransferase type-2 domain. Mg(2+) is bound by residues Ser294, Asp356, and Asp357.

The protein in the C-terminal section; belongs to the purine/pyrimidine phosphoribosyltransferase family. It depends on Mg(2+) as a cofactor.

It catalyses the reaction 5-phospho-beta-D-ribosylamine + L-glutamate + diphosphate = 5-phospho-alpha-D-ribose 1-diphosphate + L-glutamine + H2O. Its pathway is purine metabolism; IMP biosynthesis via de novo pathway; N(1)-(5-phospho-D-ribosyl)glycinamide from 5-phospho-alpha-D-ribose 1-diphosphate: step 1/2. Catalyzes the formation of phosphoribosylamine from phosphoribosylpyrophosphate (PRPP) and glutamine. The protein is Amidophosphoribosyltransferase of Staphylococcus aureus (strain COL).